Reading from the N-terminus, the 491-residue chain is Lysine--tRNA ligase (491 aa).

Residues Glu-400 and Glu-407 each coordinate Mg(2+).

It belongs to the class-II aminoacyl-tRNA synthetase family. As to quaternary structure, homodimer. Requires Mg(2+) as cofactor.

The protein localises to the cytoplasm. The catalysed reaction is tRNA(Lys) + L-lysine + ATP = L-lysyl-tRNA(Lys) + AMP + diphosphate. The sequence is that of Lysine--tRNA ligase from Mesomycoplasma hyopneumoniae (strain 7448) (Mycoplasma hyopneumoniae).